The primary structure comprises 117 residues: Small ribosomal subunit protein uS17 (117 aa).

The disordered stretch occupies residues 1–42 (MMAEAKKAAPKKAATAASKDADAKGPKHTPPNPKVRGRRKTR).

The protein belongs to the universal ribosomal protein uS17 family. In terms of assembly, part of the 30S ribosomal subunit.

Its function is as follows. One of the primary rRNA binding proteins, it binds specifically to the 5'-end of 16S ribosomal RNA. This is Small ribosomal subunit protein uS17 from Mycolicibacterium paratuberculosis (strain ATCC BAA-968 / K-10) (Mycobacterium paratuberculosis).